The sequence spans 632 residues: Maltase 1 (632 aa).

Over residues 1-29 (MEEGERWREGHVYQRSSETRKPTNYDRPD) the composition is skewed to basic and acidic residues. Residues 1-30 (MEEGERWREGHVYQRSSETRKPTNYDRPDS) form a disordered region. Asn179 and Asn212 each carry an N-linked (GlcNAc...) asparagine glycan. Catalysis depends on Asp280, which acts as the Nucleophile. Asn333 is a glycosylation site (N-linked (GlcNAc...) asparagine). Glu348 functions as the Proton donor in the catalytic mechanism. N-linked (GlcNAc...) asparagine glycosylation is found at Asn461, Asn575, and Asn578.

It belongs to the glycosyl hydrolase 13 family.

The catalysed reaction is Hydrolysis of terminal, non-reducing (1-&gt;4)-linked alpha-D-glucose residues with release of alpha-D-glucose.. In Drosophila virilis (Fruit fly), this protein is Maltase 1 (Mal-B1).